The sequence spans 273 residues: Tryptophan synthase alpha chain (273 aa).

Catalysis depends on proton acceptor residues Glu56 and Asp67.

The protein belongs to the TrpA family. In terms of assembly, tetramer of two alpha and two beta chains.

It catalyses the reaction (1S,2R)-1-C-(indol-3-yl)glycerol 3-phosphate + L-serine = D-glyceraldehyde 3-phosphate + L-tryptophan + H2O. It functions in the pathway amino-acid biosynthesis; L-tryptophan biosynthesis; L-tryptophan from chorismate: step 5/5. In terms of biological role, the alpha subunit is responsible for the aldol cleavage of indoleglycerol phosphate to indole and glyceraldehyde 3-phosphate. The sequence is that of Tryptophan synthase alpha chain from Shewanella baltica (strain OS185).